The primary structure comprises 124 residues: Protein archease (124 aa).

Positions 7, 10, 123, and 124 each coordinate Ca(2+).

This sequence belongs to the archease family.

Functionally, activates the tRNA-splicing ligase complex by facilitating the enzymatic turnover of catalytic subunit RtcB. Acts by promoting the guanylylation of RtcB, a key intermediate step in tRNA ligation. Can also alter the NTP specificity of RtcB such that ATP, dGTP or ITP is used efficiently. May also act as a chaperone or modulator of proteins involved in DNA or RNA processing. This is Protein archease from Thermotoga maritima (strain ATCC 43589 / DSM 3109 / JCM 10099 / NBRC 100826 / MSB8).